The chain runs to 1170 residues: Protein SCAR4 (1170 aa).

Disordered stretches follow at residues 180–207 (KLGK…EDSR), 356–376 (NDAD…SDDK), 631–674 (AAPK…PRDL), 701–742 (SYSG…NQTG), 783–819 (NQRQ…SSPL), 960–980 (EESK…SDTY), and 1026–1046 (HNNP…HPLE). The segment covering 183–195 (KDKRLRQSKKKGS) has biased composition (basic residues). Positions 198-207 (TIKETPEDSR) are enriched in basic and acidic residues. The span at 356–365 (NDADSPASTE) shows a compositional bias: polar residues. Positions 366–376 (SEVKEAGSDDK) are enriched in basic and acidic residues. Composition is skewed to polar residues over residues 640-668 (SQDG…TLMS), 701-716 (SYSG…IVSD), 783-818 (NQRQ…QSSP), and 967-980 (EQSP…SDTY). Residues 1105-1123 (ENDSLLEIIRSKSFNLRPA) enclose the WH2 domain.

The protein belongs to the SCAR/WAVE family. Interacts with SPK1. In terms of tissue distribution, expressed in expanding cotyledons, expanding leaves and expanding siliques containing developing embryos. Detected in unopened flower buds and in the expanding tip region of roots. Reduced expression in mature leaves.

It localises to the cytoplasm. It is found in the cytoskeleton. Its function is as follows. Involved in regulation of actin and microtubule organization. Part of a WAVE complex that activates the Arp2/3 complex. Regulates trichome branch positioning and expansion. In Arabidopsis thaliana (Mouse-ear cress), this protein is Protein SCAR4 (SCAR4).